Reading from the N-terminus, the 554-residue chain is Potassium/proton antiporter CemA (554 aa).

Residues 50–70 form a helical membrane-spanning segment; the sequence is SLFVVLFIPFFINIFTKIYVF. Residues 113–410 form an insert region; the sequence is KTENFFPEKP…VPYNFNKNTE (298 aa). 3 helical membrane passes run 429–449, 479–499, and 514–534; these read ISAITNLLADFMGLFILLFLL, MLLFTDLLVGFHSPRGWEVIF, and IIFLLVGTFPVLLDALFKYWI.

Belongs to the CemA family.

Its subcellular location is the plastid. It localises to the chloroplast inner membrane. It catalyses the reaction K(+)(in) + H(+)(out) = K(+)(out) + H(+)(in). Its function is as follows. Contributes to K(+)/H(+) antiport activity by supporting proton efflux to control proton extrusion and homeostasis in chloroplasts in a light-dependent manner to modulate photosynthesis. Prevents excessive induction of non-photochemical quenching (NPQ) under continuous-light conditions. Indirectly promotes efficient inorganic carbon uptake into chloroplasts. The protein is Potassium/proton antiporter CemA of Stigeoclonium helveticum (Green alga).